Reading from the N-terminus, the 252-residue chain is Methylthioribulose-1-phosphate dehydratase (252 aa).

Cysteine 105 lines the substrate pocket. Residues histidine 123 and histidine 125 each contribute to the Zn(2+) site. The active-site Proton donor/acceptor is glutamate 151. A Zn(2+)-binding site is contributed by histidine 208.

Belongs to the aldolase class II family. MtnB subfamily. The cofactor is Zn(2+).

It localises to the cytoplasm. It catalyses the reaction 5-(methylsulfanyl)-D-ribulose 1-phosphate = 5-methylsulfanyl-2,3-dioxopentyl phosphate + H2O. Its pathway is amino-acid biosynthesis; L-methionine biosynthesis via salvage pathway; L-methionine from S-methyl-5-thio-alpha-D-ribose 1-phosphate: step 2/6. Catalyzes the dehydration of methylthioribulose-1-phosphate (MTRu-1-P) into 2,3-diketo-5-methylthiopentyl-1-phosphate (DK-MTP-1-P). This is Methylthioribulose-1-phosphate dehydratase from Sclerotinia sclerotiorum (strain ATCC 18683 / 1980 / Ss-1) (White mold).